The chain runs to 205 residues: MSKRESAKYKIDRRLGENIWGRPKSPVNRREYGPGQHGQRRKGKLSDFGVQLRAKQKLKGFYGDISEKQFRKTYEEAARRKGDTGENLIGLLESRLDAVVYRAKFVPTIFAARQFINHGHVNVNGRRVNVQSYRLKTGDVVEVREKSKQLVIVLEAVQLAERDVPDYIEVDHNKLVATYSRVPTLTDVPYAVQMEPNLVVEFYSR.

Residues 19–45 (IWGRPKSPVNRREYGPGQHGQRRKGKL) are disordered. One can recognise an S4 RNA-binding domain in the interval 94–157 (SRLDAVVYRA…KQLVIVLEAV (64 aa)).

Belongs to the universal ribosomal protein uS4 family. In terms of assembly, part of the 30S ribosomal subunit. Contacts protein S5. The interaction surface between S4 and S5 is involved in control of translational fidelity.

Its function is as follows. One of the primary rRNA binding proteins, it binds directly to 16S rRNA where it nucleates assembly of the body of the 30S subunit. Functionally, with S5 and S12 plays an important role in translational accuracy. The polypeptide is Small ribosomal subunit protein uS4 (Brucella anthropi (strain ATCC 49188 / DSM 6882 / CCUG 24695 / JCM 21032 / LMG 3331 / NBRC 15819 / NCTC 12168 / Alc 37) (Ochrobactrum anthropi)).